We begin with the raw amino-acid sequence, 80 residues long: Exodeoxyribonuclease 7 small subunit (80 aa).

It belongs to the XseB family. As to quaternary structure, heterooligomer composed of large and small subunits.

It is found in the cytoplasm. The catalysed reaction is Exonucleolytic cleavage in either 5'- to 3'- or 3'- to 5'-direction to yield nucleoside 5'-phosphates.. Its function is as follows. Bidirectionally degrades single-stranded DNA into large acid-insoluble oligonucleotides, which are then degraded further into small acid-soluble oligonucleotides. In Lactobacillus helveticus (strain DPC 4571), this protein is Exodeoxyribonuclease 7 small subunit.